The primary structure comprises 242 residues: Endoglucanase (242 aa).

The first 21 residues, Met-1–Ala-21, serve as a signal peptide directing secretion. Asp-47 acts as the Nucleophile in catalysis. 3 N-linked (GlcNAc...) asparagine glycosylation sites follow: Asn-79, Asn-103, and Asn-217.

It belongs to the glycosyl hydrolase 45 (cellulase K) family. Expressed in larval carcasses and gut, and adult gut.

Its subcellular location is the secreted. The enzyme catalyses Endohydrolysis of (1-&gt;4)-beta-D-glucosidic linkages in cellulose, lichenin and cereal beta-D-glucans.. This is Endoglucanase from Phaedon cochleariae (Mustard beetle).